We begin with the raw amino-acid sequence, 124 residues long: Non-specific lipid-transfer protein (124 aa).

An N-terminal signal peptide occupies residues 1-26 (MANSGVMKLVCLVLACMVVAAPLAEA). Cystine bridges form between cysteine 30-cysteine 77, cysteine 40-cysteine 54, cysteine 55-cysteine 100, and cysteine 75-cysteine 114.

It belongs to the plant LTP family.

Plant non-specific lipid-transfer proteins transfer phospholipids as well as galactolipids across membranes. May play a role in wax or cutin deposition in the cell walls of expanding epidermal cells and certain secretory tissues. This chain is Non-specific lipid-transfer protein, found in Macadamia integrifolia (Macadamia nut).